Here is a 349-residue protein sequence, read N- to C-terminus: UDP-N-acetylenolpyruvoylglucosamine reductase (349 aa).

Residues 17–187 form the FAD-binding PCMH-type domain; sequence VNESADLIIQ…TAITLRLNKQ (171 aa). Arg163 is an active-site residue. Ser233 acts as the Proton donor in catalysis. Glu328 is an active-site residue.

This sequence belongs to the MurB family. It depends on FAD as a cofactor.

The protein localises to the cytoplasm. It carries out the reaction UDP-N-acetyl-alpha-D-muramate + NADP(+) = UDP-N-acetyl-3-O-(1-carboxyvinyl)-alpha-D-glucosamine + NADPH + H(+). It functions in the pathway cell wall biogenesis; peptidoglycan biosynthesis. In terms of biological role, cell wall formation. This chain is UDP-N-acetylenolpyruvoylglucosamine reductase, found in Aliivibrio fischeri (strain ATCC 700601 / ES114) (Vibrio fischeri).